The chain runs to 403 residues: Queuine tRNA-ribosyltransferase catalytic subunit 1 (403 aa).

An N-acetylalanine modification is found at alanine 2. The active-site Proton acceptor is the aspartate 105. 105 to 109 lines the queuine pocket; it reads DSGGF. Serine 139 is subject to Phosphoserine. Queuine contacts are provided by aspartate 159, glutamine 202, and glycine 229. The tract at residues 260–266 is RNA binding; the sequence is GVGYATD. Residue aspartate 279 is the Nucleophile of the active site. Residues 284–288 form an RNA binding; important for wobble base 34 recognition region; that stretch reads TRTAR. The Zn(2+) site is built by cysteine 317, cysteine 319, cysteine 322, and histidine 348.

The protein belongs to the queuine tRNA-ribosyltransferase family. As to quaternary structure, heterodimer of a catalytic subunit QTRT1 and an accessory subunit QTRT2. The cofactor is Zn(2+).

The protein localises to the cytoplasm. The protein resides in the mitochondrion outer membrane. It carries out the reaction guanosine(34) in tRNA + queuine = queuosine(34) in tRNA + guanine. Functionally, catalytic subunit of the queuine tRNA-ribosyltransferase (TGT) that catalyzes the base-exchange of a guanine (G) residue with queuine (Q) at position 34 (anticodon wobble position) in tRNAs with GU(N) anticodons (tRNA-Asp, -Asn, -His and -Tyr), resulting in the hypermodified nucleoside queuosine (7-(((4,5-cis-dihydroxy-2-cyclopenten-1-yl)amino)methyl)-7-deazaguanosine). Catalysis occurs through a double-displacement mechanism. The nucleophile active site attacks the C1' of nucleotide 34 to detach the guanine base from the RNA, forming a covalent enzyme-RNA intermediate. The proton acceptor active site deprotonates the incoming queuine, allowing a nucleophilic attack on the C1' of the ribose to form the product. In Rattus norvegicus (Rat), this protein is Queuine tRNA-ribosyltransferase catalytic subunit 1.